The sequence spans 1003 residues: Anoctamin-2 (1003 aa).

The segment at 1-68 (MATPGPRDIP…PCGGESTRSS (68 aa)) is disordered. At 1 to 365 (MATPGPRDIP…FGEKIGLYFA (365 aa)) the chain is on the cytoplasmic side. Positions 10–21 (PLLPGSPRRLSP) are enriched in low complexity. The helical transmembrane segment at 366 to 386 (WLGLYTSFLIPSSVIGVIVFL) threads the bilayer. Over 387 to 434 (YGCATIEEDIPSREMCDQQNAFTMCPLCDKSCDYWNLSSACGTAQASH) the chain is Extracellular. N-linked (GlcNAc...) asparagine glycosylation is present at Asn-422. Residues 435–455 (LFDNPATVFFSIFMALWATMF) form a helical membrane-spanning segment. The Cytoplasmic portion of the chain corresponds to 456 to 538 (LENWKRLQMR…KDRFPGYLMN (83 aa)). Residues 539-559 (FASILFMIALTFSIVFGVIVY) form a helical membrane-spanning segment. Residues 560–582 (RITTAAALSLNKATRSNVRVTVT) lie on the Extracellular side of the membrane. The chain crosses the membrane as a helical span at residues 583 to 603 (ATAVIINLVVILILDEIYGAV). Over 604 to 623 (AKWLTKIEVPKTEQTFEERL) the chain is Cytoplasmic. Residues 624 to 644 (ILKAFLLKFVNAYSPIFYVAF) form a helical membrane-spanning segment. At 645–748 (FKGRFVGRPG…YTGLTPEYME (104 aa)) the chain is on the extracellular side. Residues 749 to 769 (MIIQFGFVTLFVASFPLAPVF) form a helical membrane-spanning segment. The Cytoplasmic segment spans residues 770 to 801 (ALLNNVIEVRLDAKKFVTELRRPDAVRTKDIG). A helical membrane pass occupies residues 802 to 822 (IWFDILSGIGKFSVISNAFVI). Topologically, residues 823–907 (AITSDFIPRL…QYWFILSARL (85 aa)) are extracellular. Asn-841, Asn-849, and Asn-856 each carry an N-linked (GlcNAc...) asparagine glycan. The helical transmembrane segment at 908 to 928 (AFVIIFQNLVMFLSVLVDWMI) threads the bilayer. The Cytoplasmic portion of the chain corresponds to 929-1003 (PDIPTDISDQ…MSSGSQHTNV (75 aa)). Residues 961–1003 (MDEPALRSPGGGDRSRSRAASSAPSGQSQLGSMMSSGSQHTNV) are disordered. Residues 978–1003 (RAASSAPSGQSQLGSMMSSGSQHTNV) are compositionally biased toward low complexity. Positions 1001 to 1003 (TNV) match the DLG4 binding (PDZ) motif.

This sequence belongs to the anoctamin family. In terms of assembly, homodimer. Component of a presynaptic protein complex recruited to specialized plasma membrane domains of photoreceptors. Interacts with DLG4 by its C-terminal region. In terms of tissue distribution, retina, especially in the photoreceptor synaptic terminals.

It localises to the cell membrane. The catalysed reaction is chloride(in) = chloride(out). Channel activity is repressed by chloride inhibitors; strongly by niflumic acid (NFA), partially by flufenamic acid (FFA), and only slightly by meclofenamic acid (MFA), 5-Nitro-2-(3-phenylpropylamino)benzoic acid (NPPB), 4-acetamido-4'-isothiocyanato-stilben-2,2'-disulfonate (SITS), and 4,4'-diisothiocyanatostilbene-2,2'-disulfonic acid (DIDS). Functionally, calcium-activated chloride channel (CaCC) which may play a role in olfactory signal transduction. Odorant molecules bind to odor-sensing receptors (OSRs), leading to an increase in calcium entry that activates CaCC current which amplifies the depolarization of the OSR cells, ANO2 seems to be the underlying chloride channel involved in this process. May mediate light perception amplification in retina. This Homo sapiens (Human) protein is Anoctamin-2 (ANO2).